Reading from the N-terminus, the 477-residue chain is 3-sulfolactaldehyde dehydrogenase (477 aa).

232–233 (GS) serves as a coordination point for NAD(+). Glu252 (proton acceptor) is an active-site residue. NAD(+) is bound at residue Leu253. The Nucleophile role is filled by Cys286. Glu380 serves as a coordination point for NAD(+).

Belongs to the aldehyde dehydrogenase family.

The enzyme catalyses (2S)-3-sulfolactaldehyde + NAD(+) + H2O = (2S)-3-sulfolactate + NADH + 2 H(+). In terms of biological role, part of the sulfo-TAL (or sulfo-SFT) pathway, a D-sulfoquinovose degradation pathway that produces sulfolactate (SL). Catalyzes the oxidation of 3-sulfolactaldehyde (SLA) to sulfolactate (SL). This is 3-sulfolactaldehyde dehydrogenase from Priestia aryabhattai (Bacillus aryabhattai).